Here is a 310-residue protein sequence, read N- to C-terminus: L-lactate dehydrogenase (310 aa).

NAD(+) contacts are provided by residues Val11, Asp32, Tyr62, and Gly76–Val77. Residues Gln79, Arg85, and Asn117–Asp120 each bind substrate. NAD(+) is bound by residues Ala115–Asn117 and Ser140. Asp145 to Arg148 serves as a coordination point for substrate. Residues Arg150 and His165 each coordinate beta-D-fructose 1,6-bisphosphate. His172 serves as the catalytic Proton acceptor. The residue at position 218 (Tyr218) is a Phosphotyrosine. Thr227 lines the substrate pocket.

It belongs to the LDH/MDH superfamily. LDH family. In terms of assembly, homotetramer.

It localises to the cytoplasm. It catalyses the reaction (S)-lactate + NAD(+) = pyruvate + NADH + H(+). Its pathway is fermentation; pyruvate fermentation to lactate; (S)-lactate from pyruvate: step 1/1. With respect to regulation, activated by citrate at pH 5. Allosterically activated by fructose 1,6-bisphosphate (FBP) at pH from 5.8 to 7.2. Functionally, catalyzes the conversion of lactate to pyruvate. This Thermus aquaticus protein is L-lactate dehydrogenase.